The following is a 379-amino-acid chain: MIISASTDYRAAAQRRLPPFLFHYIDGGAYAEHTLKRNVSDLSDIALRQRVLRNMSDLSLETELFGETLAMPVALAPVGLTGMYARRGEVQAARAADSRGIPFTLSTVSVCPIEEVAPAIQRPMWFQLYVLRDRGFMRNALERAQAAGVTTLVFTVDMPVPGARYRDAHSGMSGPNASLRRIGQAITHPHWAWDVGLFGRPHDLGNISTYRGNPTGLEDYIGWLGSNFDPSISWKDLEWIREFWKGPMVIKGILDPDDARDAVKFGADGIVVSNHGGRQLDGVLSTARALPAIADAVQGDLKILADSGIRTGLDVVRMLALGADTVLLGRAFVYALAAQGEAGVANLLDLIAKEMRVAMTLTGARRIADIGRDSLVNLP.

The FMN hydroxy acid dehydrogenase domain occupies 1–379; sequence MIISASTDYR…IGRDSLVNLP (379 aa). Tyr24 lines the substrate pocket. Residues Ser106 and Gln127 each coordinate FMN. Tyr129 contacts substrate. Residue Thr155 participates in FMN binding. Arg164 is a binding site for substrate. An FMN-binding site is contributed by Lys251. His275 functions as the Proton acceptor in the catalytic mechanism. Position 278 (Arg278) interacts with substrate. 306-330 contacts FMN; it reads DSGIRTGLDVVRMLALGADTVLLGR.

It belongs to the FMN-dependent alpha-hydroxy acid dehydrogenase family. The cofactor is FMN.

It localises to the cell inner membrane. The enzyme catalyses (S)-lactate + A = pyruvate + AH2. Its function is as follows. Catalyzes the conversion of L-lactate to pyruvate. Is coupled to the respiratory chain. In Stenotrophomonas maltophilia (strain R551-3), this protein is L-lactate dehydrogenase.